The sequence spans 194 residues: dTTP/UTP pyrophosphatase (194 aa).

The active-site Proton acceptor is Asp-77.

This sequence belongs to the Maf family. YhdE subfamily. A divalent metal cation is required as a cofactor.

It is found in the cytoplasm. It carries out the reaction dTTP + H2O = dTMP + diphosphate + H(+). It catalyses the reaction UTP + H2O = UMP + diphosphate + H(+). In terms of biological role, nucleoside triphosphate pyrophosphatase that hydrolyzes dTTP and UTP. May have a dual role in cell division arrest and in preventing the incorporation of modified nucleotides into cellular nucleic acids. The protein is dTTP/UTP pyrophosphatase of Flavobacterium johnsoniae (strain ATCC 17061 / DSM 2064 / JCM 8514 / BCRC 14874 / CCUG 350202 / NBRC 14942 / NCIMB 11054 / UW101) (Cytophaga johnsonae).